Reading from the N-terminus, the 207-residue chain is Small ribosomal subunit protein uS4 (207 aa).

A disordered region spans residues lysine 31–glutamine 55. A compositionally biased stretch (polar residues) spans glycine 42–glycine 53. The region spanning serine 97 to leucine 160 is the S4 RNA-binding domain.

It belongs to the universal ribosomal protein uS4 family. As to quaternary structure, part of the 30S ribosomal subunit. Contacts protein S5. The interaction surface between S4 and S5 is involved in control of translational fidelity.

In terms of biological role, one of the primary rRNA binding proteins, it binds directly to 16S rRNA where it nucleates assembly of the body of the 30S subunit. With S5 and S12 plays an important role in translational accuracy. The protein is Small ribosomal subunit protein uS4 of Burkholderia multivorans (strain ATCC 17616 / 249).